Consider the following 105-residue polypeptide: Large ribosomal subunit protein bL21 (105 aa).

Belongs to the bacterial ribosomal protein bL21 family. As to quaternary structure, part of the 50S ribosomal subunit. Contacts protein L20.

This protein binds to 23S rRNA in the presence of protein L20. The protein is Large ribosomal subunit protein bL21 of Rhizobium rhizogenes (strain K84 / ATCC BAA-868) (Agrobacterium radiobacter).